Consider the following 563-residue polypeptide: Lipoprotein LpqB (563 aa).

Residues 1–19 (MRRMKALTAAMTAALLVSG) form the signal peptide. The N-palmitoyl cysteine moiety is linked to residue Cys20. A lipid anchor (S-diacylglycerol cysteine) is attached at Cys20.

It belongs to the LpqB lipoprotein family.

Its subcellular location is the cell membrane. This Corynebacterium efficiens (strain DSM 44549 / YS-314 / AJ 12310 / JCM 11189 / NBRC 100395) protein is Lipoprotein LpqB.